Here is a 239-residue protein sequence, read N- to C-terminus: Protein G1-like8 (239 aa).

Disordered regions lie at residues 1 to 35 and 149 to 239; these read MEGG…RYES and KARG…ATRV. Positions 9–29 are enriched in low complexity; the sequence is DAQAQAQPVAQAPPAMQPMQQ. One can recognise an ALOG domain in the interval 32–159; it reads RYESQKRRDW…ARGIPYEKKK (128 aa). Residues 157 to 161 carry the Nuclear localization signal motif; that stretch reads KKKRK. Over residues 167–178 the composition is skewed to pro residues; sequence QPPPQPPLPPQH. 2 stretches are compositionally biased toward low complexity: residues 179-215 and 223-239; these read QPGA…ATSQ and TTTT…ATRV.

Belongs to the plant homeotic and developmental regulators ALOG protein family.

It localises to the nucleus. Probable transcription regulator that acts as a developmental regulator by promoting cell growth in response to light. This chain is Protein G1-like8, found in Oryza sativa subsp. indica (Rice).